Here is a 540-residue protein sequence, read N- to C-terminus: uncharacterized protein (540 aa).

Over 1–61 the chain is Cytoplasmic; sequence MFSIFKKKTS…TNDSPWQDPT (61 aa). The helical transmembrane segment at 62-82 threads the bilayer; the sequence is YFSSFGKELMFIATCMLAQLL. Topologically, residues 83–108 are extracellular; it reads NQAGQTHALCIMNVLSKSFNSEANNQ. Residues 109 to 129 traverse the membrane as a helical segment; sequence AWLMASFPLAAGSFILISGRL. At 130 to 131 the chain is on the cytoplasmic side; sequence GD. Residues 132-152 traverse the membrane as a helical segment; the sequence is IYGLKKMLIVGYVIVIVWSII. At 153–169 the chain is on the extracellular side; it reads SGLSKYSNSDAFFITSR. Residues 170 to 190 traverse the membrane as a helical segment; it reads AFQGVGIAFILPNIMGLVGHV. Over 191 to 203 the chain is Cytoplasmic; it reads YKVGSFRKNIVIS. A helical transmembrane segment spans residues 204–224; it reads FIGACAPTGGMFGGLFGGLIV. Residues 225 to 232 lie on the Extracellular side of the membrane; sequence TEDPNQWP. A helical membrane pass occupies residues 233 to 253; it reads WVFYAFGIATFLSLLMAWYSI. The Cytoplasmic portion of the chain corresponds to 254-272; the sequence is PNNVPTNIHGLSMDWTGSA. The chain crosses the membrane as a helical span at residues 273-293; it reads LAIIGLILFNFVWNQAPIVGW. The Extracellular segment spans residues 294–295; that stretch reads DK. Residues 296-316 traverse the membrane as a helical segment; it reads PYIIVLLIISVIFLVAFFVYE. The Cytoplasmic portion of the chain corresponds to 317–334; sequence SKYAEVPLLPRAMTKNRH. A helical membrane pass occupies residues 335 to 355; the sequence is MIMILLAVFLGWGSFGIWTFY. Residues 356 to 372 are Extracellular-facing; that stretch reads YVSFQLNLRHYSPVWTG. The chain crosses the membrane as a helical span at residues 373–393; that stretch reads GTYFVFVIFGSMAAFFVAFSI. Over 394-398 the chain is Cytoplasmic; it reads KRLGP. The chain crosses the membrane as a helical span at residues 399–419; it reads ALLLCFSLMAFDAGSIMFSVL. Topologically, residues 420–429 are extracellular; the sequence is PVEQSYWKLN. The chain crosses the membrane as a helical span at residues 430–450; that stretch reads FAMQAILCFGMDLSFPASSII. Topologically, residues 451–461 are cytoplasmic; sequence LSDGLPMQYQG. A helical transmembrane segment spans residues 462 to 482; it reads MAGSLVNTVINYSASLCLGMG. Topologically, residues 483–502 are extracellular; that stretch reads GTVEHQINKSGNDLLKGYRA. A helical membrane pass occupies residues 503–523; that stretch reads AVYLGVGLASLGVVISVTYML. At 524 to 540 the chain is on the cytoplasmic side; the sequence is ENLWNRHRKSEDRSLEA.

This sequence belongs to the major facilitator superfamily.

It is found in the membrane. This is an uncharacterized protein from Saccharomyces cerevisiae (strain ATCC 204508 / S288c) (Baker's yeast).